The chain runs to 119 residues: Non-specific lipid-transfer protein 12 (119 aa).

A signal peptide spans 1-24 (MAFTPKIITCLIVLTIYMASPTES). Disulfide bonds link C28–C75, C38–C52, C53–C98, and C73–C112.

It belongs to the plant LTP family.

Plant non-specific lipid-transfer proteins transfer phospholipids as well as galactolipids across membranes. May play a role in wax or cutin deposition in the cell walls of expanding epidermal cells and certain secretory tissues. The sequence is that of Non-specific lipid-transfer protein 12 (LTP12) from Arabidopsis thaliana (Mouse-ear cress).